Reading from the N-terminus, the 685-residue chain is Probable glucan endo-1,3-beta-glucosidase btgC (685 aa).

Disordered stretches follow at residues 1–96 (MSGP…NLGP), 119–168 (GIDA…RDSY), and 180–202 (PAGQ…SPYQ). Topologically, residues 1–312 (MSGPHRSFSF…PTPGGGSRKR (312 aa)) are cytoplasmic. 2 stretches are compositionally biased toward polar residues: residues 47 to 61 (SARS…SSGF) and 73 to 90 (GQNS…TTPG). Residues 313-333 (GWIVGLALAFIVVGAIVGGAV) traverse the membrane as a helical; Signal-anchor for type II membrane protein segment. Residues 334–685 (GGTLGNRENE…IPDCGGKTAA (352 aa)) are Extracellular-facing. The segment at 335–369 (GTLGNRENEAPDTTKSASSDTESNGDLNKDSSEIK) is disordered. A compositionally biased stretch (polar residues) spans 345 to 360 (PDTTKSASSDTESNGD). Residues asparagine 405, asparagine 428, and asparagine 456 are each glycosylated (N-linked (GlcNAc...) asparagine). The active-site Proton donor is the glutamate 488. Catalysis depends on glutamate 587, which acts as the Nucleophile. An N-linked (GlcNAc...) asparagine glycan is attached at asparagine 632.

It belongs to the glycosyl hydrolase 17 family.

The protein resides in the cell membrane. It catalyses the reaction Hydrolysis of (1-&gt;3)-beta-D-glucosidic linkages in (1-&gt;3)-beta-D-glucans.. Glucanases play a role in cell expansion during growth, in cell-cell fusion during mating, and in spore release during sporulation. This enzyme may be involved in beta-glucan degradation. Active on laminarin and lichenan. The sequence is that of Probable glucan endo-1,3-beta-glucosidase btgC (btgC) from Aspergillus oryzae (strain ATCC 42149 / RIB 40) (Yellow koji mold).